Consider the following 110-residue polypeptide: MTDSEYMDRAEAALAAIEQGCDRINDATDADIDNQRVGGMITISFKNGSQLIVNLQKPLQEIWLAARSGGYHYRYDGKAWVDTKTGEEFFGNLSREASLQAGQPLEFAAA.

Belongs to the frataxin family.

In terms of biological role, involved in iron-sulfur (Fe-S) cluster assembly. May act as a regulator of Fe-S biogenesis. This Variovorax paradoxus (strain S110) protein is Iron-sulfur cluster assembly protein CyaY.